Here is a 230-residue protein sequence, read N- to C-terminus: Urease accessory protein UreE (230 aa).

Composition is skewed to basic and acidic residues over residues 182–193 (HVHVDSPLDEPH) and 204–230 (SHGD…DHKH). Positions 182 to 230 (HVHVDSPLDEPHGSGLHVHAIHSHGDGHSHSHSHDHDHDHRHDDHDHKH) are disordered.

Belongs to the UreE family.

Its subcellular location is the cytoplasm. Functionally, involved in urease metallocenter assembly. Binds nickel. Probably functions as a nickel donor during metallocenter assembly. The polypeptide is Urease accessory protein UreE (Yersinia mollaretii).